Reading from the N-terminus, the 497-residue chain is Kynureninase (497 aa).

Residues 59 to 86 are disordered; the sequence is GRLPAYPPNHAKPGETATAQNGTSNTND. A compositionally biased stretch (polar residues) spans 75–86; it reads ATAQNGTSNTND. Residues Leu-166, Thr-167, 194–197, Asp-278, His-281, and Tyr-303 each bind pyridoxal 5'-phosphate; that span reads FPSD. At Lys-304 the chain carries N6-(pyridoxal phosphate)lysine. 2 residues coordinate pyridoxal 5'-phosphate: Trp-337 and Asn-365.

The protein belongs to the kynureninase family. In terms of assembly, homodimer. Requires pyridoxal 5'-phosphate as cofactor.

The protein resides in the cytoplasm. It catalyses the reaction L-kynurenine + H2O = anthranilate + L-alanine + H(+). The enzyme catalyses 3-hydroxy-L-kynurenine + H2O = 3-hydroxyanthranilate + L-alanine + H(+). It participates in amino-acid degradation; L-kynurenine degradation; L-alanine and anthranilate from L-kynurenine: step 1/1. The protein operates within cofactor biosynthesis; NAD(+) biosynthesis; quinolinate from L-kynurenine: step 2/3. Its function is as follows. Catalyzes the cleavage of L-kynurenine (L-Kyn) and L-3-hydroxykynurenine (L-3OHKyn) into anthranilic acid (AA) and 3-hydroxyanthranilic acid (3-OHAA), respectively. The sequence is that of Kynureninase from Pyricularia oryzae (strain 70-15 / ATCC MYA-4617 / FGSC 8958) (Rice blast fungus).